The primary structure comprises 111 residues: Large ribosomal subunit protein uL22 (111 aa).

Belongs to the universal ribosomal protein uL22 family. In terms of assembly, part of the 50S ribosomal subunit.

In terms of biological role, this protein binds specifically to 23S rRNA; its binding is stimulated by other ribosomal proteins, e.g. L4, L17, and L20. It is important during the early stages of 50S assembly. It makes multiple contacts with different domains of the 23S rRNA in the assembled 50S subunit and ribosome. Its function is as follows. The globular domain of the protein is located near the polypeptide exit tunnel on the outside of the subunit, while an extended beta-hairpin is found that lines the wall of the exit tunnel in the center of the 70S ribosome. The chain is Large ribosomal subunit protein uL22 from Chlamydia trachomatis serovar L2b (strain UCH-1/proctitis).